Here is a 306-residue protein sequence, read N- to C-terminus: Protein STPG3 (306 aa).

Residues 210–230 (CSYTPLLPTSKPSGEKRPSPN) are disordered.

This is Protein STPG3 from Mus musculus (Mouse).